The chain runs to 82 residues: Toxin GTx1-15 (82 aa).

The first 21 residues, 1–21 (MKTSVVFVIAGLALLSVACYA), serve as a signal peptide directing secretion. The propeptide occupies 22–46 (SELKEQSSINEVLSTIFHFEQPEER). Intrachain disulfides connect C48–C63, C55–C69, and C62–C76. Phenylalanine amide is present on F80.

The protein belongs to the neurotoxin 10 (Hwtx-1) family. 08 (Gtx1-15) subfamily. As to expression, expressed by the venom gland.

It is found in the secreted. Its function is as follows. Potent voltage-gated sodium channel blocker. Potently inhibits the voltage-gated sodium channels Nav1.7/SCN9A (IC(50)=0.58-10 nM). Shows a moderate activity on Nav1.1/SCN1A (IC(50)=6 nM), Nav1.2/SCN2A (IC(50)=5-128 nM), Nav1.3/SCN3A (IC(50)=20.3-170 nM), and Nav1.6/SCN8A (IC(50)=17-20.1 nM). Shows an unclear inhibition of Nav1.4/SCN4A (IC(50)=200 nM to &gt;10 uM), Nav1.5/SCN5A (IC(50)=140 nM to &gt;10 uM) and Nav1.8/SCN10A (IC(50)=68-12200 nM). Weakly blocks the low voltage-gated calcium channels Cav3.1/CACNA1G (30% inhibition of the peak current by 9.8 nM of the toxin). It shows moderate affinity for lipid bilayers. This chain is Toxin GTx1-15, found in Grammostola rosea (Chilean rose tarantula).